The chain runs to 243 residues: uncharacterized protein (243 aa).

This is an uncharacterized protein from Acidianus bottle-shaped virus (isolate Italy/Pozzuoli) (ABV).